The following is a 129-amino-acid chain: Lysozyme C, milk isozyme (129 aa).

Residues 1-129 (KIFSKCELAR…LSKYLASCNL (129 aa)) enclose the C-type lysozyme domain. 4 disulfide bridges follow: Cys6-Cys127, Cys30-Cys115, Cys65-Cys80, and Cys76-Cys94. Active-site residues include Glu35 and Asp53. Lys82, Asp85, Asn87, Asp90, and Asp91 together coordinate Ca(2+).

This sequence belongs to the glycosyl hydrolase 22 family. In terms of assembly, monomer. The cofactor is Ca(2+).

It catalyses the reaction Hydrolysis of (1-&gt;4)-beta-linkages between N-acetylmuramic acid and N-acetyl-D-glucosamine residues in a peptidoglycan and between N-acetyl-D-glucosamine residues in chitodextrins.. Lysozymes have primarily a bacteriolytic function; those in tissues and body fluids are associated with the monocyte-macrophage system and enhance the activity of immunoagents. This chain is Lysozyme C, milk isozyme, found in Canis lupus familiaris (Dog).